The following is a 149-amino-acid chain: Urease accessory protein UreE (149 aa).

The protein belongs to the UreE family.

The protein localises to the cytoplasm. Involved in urease metallocenter assembly. Binds nickel. Probably functions as a nickel donor during metallocenter assembly. This chain is Urease accessory protein UreE, found in Prochlorococcus marinus (strain MIT 9312).